Here is a 659-residue protein sequence, read N- to C-terminus: Exoribonuclease 2 (659 aa).

The RNB domain maps to 189 to 532 (REDLTHLYFT…HRLIKQVLSN (344 aa)). The region spanning 576–658 (NVEFDGEIQD…ETRSVVGDVL (83 aa)) is the S1 motif domain.

Belongs to the RNR ribonuclease family. RNase II subfamily.

It is found in the cytoplasm. It catalyses the reaction Exonucleolytic cleavage in the 3'- to 5'-direction to yield nucleoside 5'-phosphates.. Its function is as follows. Involved in mRNA degradation. Hydrolyzes single-stranded polyribonucleotides processively in the 3' to 5' direction. The chain is Exoribonuclease 2 from Glaesserella parasuis serovar 5 (strain SH0165) (Haemophilus parasuis).